Here is a 337-residue protein sequence, read N- to C-terminus: NADH-quinone oxidoreductase subunit H (337 aa).

9 consecutive transmembrane segments (helical) span residues Gly9–Val29, Pro50–Phe70, Gly82–Ile102, Val115–Gly135, Ile161–Val181, Thr186–Ala206, Ser245–Ile265, Val273–Val293, and Phe313–Ile333.

The protein belongs to the complex I subunit 1 family. In terms of assembly, NDH-1 is composed of 14 different subunits. Subunits NuoA, H, J, K, L, M, N constitute the membrane sector of the complex.

The protein resides in the cell inner membrane. The enzyme catalyses a quinone + NADH + 5 H(+)(in) = a quinol + NAD(+) + 4 H(+)(out). NDH-1 shuttles electrons from NADH, via FMN and iron-sulfur (Fe-S) centers, to quinones in the respiratory chain. The immediate electron acceptor for the enzyme in this species is believed to be ubiquinone. Couples the redox reaction to proton translocation (for every two electrons transferred, four hydrogen ions are translocated across the cytoplasmic membrane), and thus conserves the redox energy in a proton gradient. This subunit may bind ubiquinone. In Parvibaculum lavamentivorans (strain DS-1 / DSM 13023 / NCIMB 13966), this protein is NADH-quinone oxidoreductase subunit H.